The chain runs to 323 residues: MNSSCCLSSVSPMLPNLSEHPAAPPASNRSGSGFCEQVFIKPEVFLALGIVSLMENILVILAVVRNGNLHSPMYFFLCSLAAADMLVSLSNSLETIMIAVINSDSLTLEDQFIQHMDNIFDSMICISLVASICNLLAIAIDRYVTIFYALRYHSIMTVRKALTLIGVIWVCCGICGVMFIIYSESKMVIVCLITMFFAMVLLMGTLYIHMFLFARLHVQRIAVLPPAGVVAPQQHSCMKGAVTITILLGVFIFCWAPFFLHLVLIITCPTNPYCICYTAHFNTYLVLIMCNSVIDPLIYAFRSLELRNTFKEILCGCNSMNLG.

The Extracellular segment spans residues 1-37 (MNSSCCLSSVSPMLPNLSEHPAAPPASNRSGSGFCEQ). N-linked (GlcNAc...) asparagine glycosylation is found at asparagine 2, asparagine 16, and asparagine 28. A helical transmembrane segment spans residues 38–63 (VFIKPEVFLALGIVSLMENILVILAV). At 64 to 75 (VRNGNLHSPMYF) the chain is on the cytoplasmic side. A helical membrane pass occupies residues 76–100 (FLCSLAAADMLVSLSNSLETIMIAV). Over 101-118 (INSDSLTLEDQFIQHMDN) the chain is Extracellular. The chain crosses the membrane as a helical span at residues 119–140 (IFDSMICISLVASICNLLAIAI). Topologically, residues 141 to 160 (DRYVTIFYALRYHSIMTVRK) are cytoplasmic. The helical transmembrane segment at 161–181 (ALTLIGVIWVCCGICGVMFII) threads the bilayer. Residues 182–186 (YSESK) are Extracellular-facing. Residues 187–210 (MVIVCLITMFFAMVLLMGTLYIHM) traverse the membrane as a helical segment. The Cytoplasmic portion of the chain corresponds to 211–245 (FLFARLHVQRIAVLPPAGVVAPQQHSCMKGAVTIT). A helical transmembrane segment spans residues 246–268 (ILLGVFIFCWAPFFLHLVLIITC). At 269 to 277 (PTNPYCICY) the chain is on the extracellular side. Residues 278–301 (TAHFNTYLVLIMCNSVIDPLIYAF) form a helical membrane-spanning segment. The Cytoplasmic portion of the chain corresponds to 302–323 (RSLELRNTFKEILCGCNSMNLG). Residue cysteine 315 is the site of S-palmitoyl cysteine attachment.

Belongs to the G-protein coupled receptor 1 family. Brain.

The protein resides in the cell membrane. Functionally, receptor for MSH (alpha, beta and gamma) and ACTH. This receptor is mediated by G proteins which activate adenylate cyclase. Required for expression of anticipatory patterns of activity and wakefulness during periods of limited nutrient availability and for the normal regulation of circadian clock activity in the brain. This chain is Melanocortin receptor 3 (Mc3r), found in Mus musculus (Mouse).